Consider the following 211-residue polypeptide: FMN-dependent NADH:quinone oxidoreductase (211 aa).

FMN is bound by residues 17–19, 102–105, and 146–149; these read SNS, MWNL, and SRGG.

Belongs to the azoreductase type 1 family. As to quaternary structure, homodimer. FMN serves as cofactor.

It catalyses the reaction 2 a quinone + NADH + H(+) = 2 a 1,4-benzosemiquinone + NAD(+). The enzyme catalyses N,N-dimethyl-1,4-phenylenediamine + anthranilate + 2 NAD(+) = 2-(4-dimethylaminophenyl)diazenylbenzoate + 2 NADH + 2 H(+). Its function is as follows. Quinone reductase that provides resistance to thiol-specific stress caused by electrophilic quinones. Also exhibits azoreductase activity. Catalyzes the reductive cleavage of the azo bond in aromatic azo compounds to the corresponding amines. The chain is FMN-dependent NADH:quinone oxidoreductase from Macrococcus caseolyticus (strain JCSC5402) (Macrococcoides caseolyticum).